Consider the following 52-residue polypeptide: Light-harvesting protein B800/830/1020 alpha-1 chain (52 aa).

The Cytoplasmic portion of the chain corresponds to 1 to 12 (MWRIWKVFDPRR). The chain crosses the membrane as a helical span at residues 13–33 (ILIATAIWLIIIALTIHVILM). H29 serves as a coordination point for a bacteriochlorophyll. Over 34–52 (TTERFNWLEGAPAAEYYSS) the chain is Periplasmic.

This sequence belongs to the antenna complex alpha subunit family. The core complex is formed by different alpha and beta chains, binding bacteriochlorophyll molecules, and arranged most probably in tetrameric structures disposed around the reaction center. The non-pigmented gamma chains may constitute additional components.

It localises to the cell inner membrane. Functionally, antenna complexes are light-harvesting systems, which transfer the excitation energy to the reaction centers. The protein is Light-harvesting protein B800/830/1020 alpha-1 chain of Halorhodospira halochloris (Ectothiorhodospira halochloris).